Consider the following 146-residue polypeptide: Cytochrome c oxidase subunit 5A, mitochondrial (146 aa).

Residues 1–37 (MLAAALRRCTAAAAARGLLHPVSAPSPAAAVCSIRCY) constitute a mitochondrion transit peptide. Residues 2-16 (LAAALRRCTAAAAAR) carry the SIFI-degron motif. Lys83 and Lys109 each carry N6-acetyllysine. Thr137 carries the phosphothreonine modification.

In terms of assembly, component of the cytochrome c oxidase (complex IV, CIV), a multisubunit enzyme composed of 14 subunits. The complex is composed of a catalytic core of 3 subunits MT-CO1, MT-CO2 and MT-CO3, encoded in the mitochondrial DNA, and 11 supernumerary subunits COX4I, COX5A, COX5B, COX6A, COX6B, COX6C, COX7A, COX7B, COX7C, COX8 and NDUFA4, which are encoded in the nuclear genome. The complex exists as a monomer or a dimer and forms supercomplexes (SCs) in the inner mitochondrial membrane with NADH-ubiquinone oxidoreductase (complex I, CI) and ubiquinol-cytochrome c oxidoreductase (cytochrome b-c1 complex, complex III, CIII), resulting in different assemblies (supercomplex SCI(1)III(2)IV(1) and megacomplex MCI(2)III(2)IV(2)). Interacts with AFG1L. Interacts with RAB5IF. Post-translationally, in response to mitochondrial stress, the precursor protein is ubiquitinated by the SIFI complex in the cytoplasm before mitochondrial import, leading to its degradation. Within the SIFI complex, UBR4 initiates ubiquitin chain that are further elongated or branched by KCMF1. As to expression, expressed in the head of epididymal sperm but not in testicular sperm (at protein level).

The protein resides in the mitochondrion inner membrane. It functions in the pathway energy metabolism; oxidative phosphorylation. Its function is as follows. Component of the cytochrome c oxidase, the last enzyme in the mitochondrial electron transport chain which drives oxidative phosphorylation. The respiratory chain contains 3 multisubunit complexes succinate dehydrogenase (complex II, CII), ubiquinol-cytochrome c oxidoreductase (cytochrome b-c1 complex, complex III, CIII) and cytochrome c oxidase (complex IV, CIV), that cooperate to transfer electrons derived from NADH and succinate to molecular oxygen, creating an electrochemical gradient over the inner membrane that drives transmembrane transport and the ATP synthase. Cytochrome c oxidase is the component of the respiratory chain that catalyzes the reduction of oxygen to water. Electrons originating from reduced cytochrome c in the intermembrane space (IMS) are transferred via the dinuclear copper A center (CU(A)) of subunit 2 and heme A of subunit 1 to the active site in subunit 1, a binuclear center (BNC) formed by heme A3 and copper B (CU(B)). The BNC reduces molecular oxygen to 2 water molecules using 4 electrons from cytochrome c in the IMS and 4 protons from the mitochondrial matrix. This is Cytochrome c oxidase subunit 5A, mitochondrial (Cox5a) from Rattus norvegicus (Rat).